The following is a 180-amino-acid chain: Acireductone dioxygenase (180 aa).

Residues His97, His99, Glu103, and His141 each contribute to the Fe(2+) site. Ni(2+)-binding residues include His97, His99, Glu103, and His141.

It belongs to the acireductone dioxygenase (ARD) family. In terms of assembly, monomer. Requires Fe(2+) as cofactor. Mg(2+) is required as a cofactor. The cofactor is Ni(2+). It depends on Mn(2+) as a cofactor. Co(2+) serves as cofactor.

The enzyme catalyses 1,2-dihydroxy-5-(methylsulfanyl)pent-1-en-3-one + O2 = 3-(methylsulfanyl)propanoate + CO + formate + 2 H(+). It carries out the reaction 1,2-dihydroxy-5-(methylsulfanyl)pent-1-en-3-one + O2 = 4-methylsulfanyl-2-oxobutanoate + formate + 2 H(+). Its pathway is amino-acid biosynthesis; L-methionine biosynthesis via salvage pathway; L-methionine from S-methyl-5-thio-alpha-D-ribose 1-phosphate: step 5/6. Functionally, catalyzes 2 different reactions between oxygen and the acireductone 1,2-dihydroxy-3-keto-5-methylthiopentene (DHK-MTPene) depending upon the metal bound in the active site. Fe-containing acireductone dioxygenase (Fe-ARD) produces formate and 2-keto-4-methylthiobutyrate (KMTB), the alpha-ketoacid precursor of methionine in the methionine recycle pathway. Ni-containing acireductone dioxygenase (Ni-ARD) produces methylthiopropionate, carbon monoxide and formate, and does not lie on the methionine recycle pathway. This Klebsiella oxytoca protein is Acireductone dioxygenase (mtnD).